The chain runs to 189 residues: Small ribosomal subunit protein uS7 (189 aa).

The protein belongs to the universal ribosomal protein uS7 family. Part of the 30S ribosomal subunit.

Functionally, one of the primary rRNA binding proteins, it binds directly to 16S rRNA where it nucleates assembly of the head domain of the 30S subunit. Is located at the subunit interface close to the decoding center. The polypeptide is Small ribosomal subunit protein uS7 (Methanosarcina mazei (strain ATCC BAA-159 / DSM 3647 / Goe1 / Go1 / JCM 11833 / OCM 88) (Methanosarcina frisia)).